The primary structure comprises 126 residues: Holo-[acyl-carrier-protein] synthase (126 aa).

The Mg(2+) site is built by aspartate 9 and glutamate 58.

Belongs to the P-Pant transferase superfamily. AcpS family. The cofactor is Mg(2+).

Its subcellular location is the cytoplasm. The catalysed reaction is apo-[ACP] + CoA = holo-[ACP] + adenosine 3',5'-bisphosphate + H(+). Transfers the 4'-phosphopantetheine moiety from coenzyme A to a Ser of acyl-carrier-protein. The polypeptide is Holo-[acyl-carrier-protein] synthase (Yersinia enterocolitica serotype O:8 / biotype 1B (strain NCTC 13174 / 8081)).